The sequence spans 957 residues: Glycine dehydrogenase (decarboxylating) (957 aa).

Lys708 carries the N6-(pyridoxal phosphate)lysine modification.

This sequence belongs to the GcvP family. As to quaternary structure, the glycine cleavage system is composed of four proteins: P, T, L and H. Pyridoxal 5'-phosphate serves as cofactor.

The catalysed reaction is N(6)-[(R)-lipoyl]-L-lysyl-[glycine-cleavage complex H protein] + glycine + H(+) = N(6)-[(R)-S(8)-aminomethyldihydrolipoyl]-L-lysyl-[glycine-cleavage complex H protein] + CO2. Its function is as follows. The glycine cleavage system catalyzes the degradation of glycine. The P protein binds the alpha-amino group of glycine through its pyridoxal phosphate cofactor; CO(2) is released and the remaining methylamine moiety is then transferred to the lipoamide cofactor of the H protein. The polypeptide is Glycine dehydrogenase (decarboxylating) (Salmonella dublin (strain CT_02021853)).